The sequence spans 278 residues: Large ribosomal subunit protein uL2 (278 aa).

The disordered stretch occupies residues 222–264 (RGVAMNPVDHPHGGGEGRTSGGRNPVTPWGVPTKGKKTRSNKR).

Belongs to the universal ribosomal protein uL2 family. In terms of assembly, part of the 50S ribosomal subunit. Forms a bridge to the 30S subunit in the 70S ribosome.

Functionally, one of the primary rRNA binding proteins. Required for association of the 30S and 50S subunits to form the 70S ribosome, for tRNA binding and peptide bond formation. It has been suggested to have peptidyltransferase activity; this is somewhat controversial. Makes several contacts with the 16S rRNA in the 70S ribosome. This chain is Large ribosomal subunit protein uL2, found in Methylobacterium radiotolerans (strain ATCC 27329 / DSM 1819 / JCM 2831 / NBRC 15690 / NCIMB 10815 / 0-1).